We begin with the raw amino-acid sequence, 256 residues long: 5'-nucleotidase SurE (256 aa).

A divalent metal cation-binding residues include Asp8, Asp9, Ser40, and Asn92.

This sequence belongs to the SurE nucleotidase family. The cofactor is a divalent metal cation.

Its subcellular location is the cytoplasm. The enzyme catalyses a ribonucleoside 5'-phosphate + H2O = a ribonucleoside + phosphate. Functionally, nucleotidase that shows phosphatase activity on nucleoside 5'-monophosphates. The sequence is that of 5'-nucleotidase SurE from Sinorhizobium fredii (strain NBRC 101917 / NGR234).